The chain runs to 872 residues: DNA mismatch repair protein MutS (872 aa).

622 to 629 (GPNMAGKS) contacts ATP.

It belongs to the DNA mismatch repair MutS family.

In terms of biological role, this protein is involved in the repair of mismatches in DNA. It is possible that it carries out the mismatch recognition step. This protein has a weak ATPase activity. The chain is DNA mismatch repair protein MutS from Geotalea uraniireducens (strain Rf4) (Geobacter uraniireducens).